A 285-amino-acid chain; its full sequence is ATP synthase gamma chain (285 aa).

This sequence belongs to the ATPase gamma chain family. F-type ATPases have 2 components, CF(1) - the catalytic core - and CF(0) - the membrane proton channel. CF(1) has five subunits: alpha(3), beta(3), gamma(1), delta(1), epsilon(1). CF(0) has three main subunits: a, b and c.

The protein resides in the cell membrane. In terms of biological role, produces ATP from ADP in the presence of a proton gradient across the membrane. The gamma chain is believed to be important in regulating ATPase activity and the flow of protons through the CF(0) complex. This is ATP synthase gamma chain from Exiguobacterium sp. (strain ATCC BAA-1283 / AT1b).